A 57-amino-acid chain; its full sequence is Small ribosomal subunit protein eS27 (57 aa).

4 residues coordinate Zn(2+): cysteine 10, cysteine 13, cysteine 29, and cysteine 32. The C4-type zinc finger occupies 10-32; it reads CDDCENEQVLFGKAANTVNCAVC.

This sequence belongs to the eukaryotic ribosomal protein eS27 family. In terms of assembly, part of the 30S ribosomal subunit. It depends on Zn(2+) as a cofactor.

This chain is Small ribosomal subunit protein eS27, found in Natronomonas pharaonis (strain ATCC 35678 / DSM 2160 / CIP 103997 / JCM 8858 / NBRC 14720 / NCIMB 2260 / Gabara) (Halobacterium pharaonis).